A 216-amino-acid polypeptide reads, in one-letter code: Octanoyltransferase (216 aa).

The 187-residue stretch at 30 to 216 (GEAGEAVWLL…KRQFFEVFGA (187 aa)) folds into the BPL/LPL catalytic domain. Substrate contacts are provided by residues 69–76 (RGGQYTYH), 149–151 (AIG), and 162–164 (GLS). C180 functions as the Acyl-thioester intermediate in the catalytic mechanism.

This sequence belongs to the LipB family.

It localises to the cytoplasm. It catalyses the reaction octanoyl-[ACP] + L-lysyl-[protein] = N(6)-octanoyl-L-lysyl-[protein] + holo-[ACP] + H(+). It functions in the pathway protein modification; protein lipoylation via endogenous pathway; protein N(6)-(lipoyl)lysine from octanoyl-[acyl-carrier-protein]: step 1/2. Its function is as follows. Catalyzes the transfer of endogenously produced octanoic acid from octanoyl-acyl-carrier-protein onto the lipoyl domains of lipoate-dependent enzymes. Lipoyl-ACP can also act as a substrate although octanoyl-ACP is likely to be the physiological substrate. The sequence is that of Octanoyltransferase from Jannaschia sp. (strain CCS1).